Reading from the N-terminus, the 314-residue chain is MDMKASGHHKVAIIGSGNIGTDLMIKVMRHGRSLEMGAMVGIDAASDGLARAARLGVPTTAEGIDGLVGMPGFGDIRIAFDATSAGAHAHHNRVLQQHGVRVIDLTPASIGPYVVPVVNLDQHLDAPNINMVTCGGQATIPMVAAVSRVARVHYAEIVASISSRSAGPGTRANIDEFTETTSQALCSVGGAARGKAIIVLNPAEPPLMMRDTVFTLSEDGDEAEIAASVEAMAQAVQGYVPGYRLKQRVQFERIAASAPLNIPGLGPMSGLKTSIFLEVEGAAHYLPAYAGNLDIMTSAALACAERLAETRLSA.

16-19 (SGNI) is a binding site for NAD(+). The active-site Acyl-thioester intermediate is the Cys-134. Residues 165–173 (SAGPGTRAN) and Asn-292 contribute to the NAD(+) site.

This sequence belongs to the acetaldehyde dehydrogenase family.

The catalysed reaction is acetaldehyde + NAD(+) + CoA = acetyl-CoA + NADH + H(+). This Cupriavidus necator (strain ATCC 17699 / DSM 428 / KCTC 22496 / NCIMB 10442 / H16 / Stanier 337) (Ralstonia eutropha) protein is Acetaldehyde dehydrogenase 1 (mhpF).